The chain runs to 188 residues: Accessory gene regulator protein B (188 aa).

Transmembrane regions (helical) follow at residues 49–69 (LALL…FLTL), 104–126 (ISFQ…YAPA), 143–163 (IKSI…PPPY), and 166–186 (FVVY…SIKE).

It belongs to the AgrB family.

The protein resides in the cell membrane. Functionally, essential for the production of a quorum sensing system signal molecule, the autoinducing peptide (AIP). This quorum sensing system is responsible for the regulation of the expression of virulence factor genes. Involved in the proteolytic processing of AgrD, the precursor of AIP. The polypeptide is Accessory gene regulator protein B (Staphylococcus intermedius).